A 258-amino-acid chain; its full sequence is UPF0246 protein VV1_0535 (258 aa).

The protein belongs to the UPF0246 family.

This chain is UPF0246 protein VV1_0535, found in Vibrio vulnificus (strain CMCP6).